The following is a 602-amino-acid chain: Cytoskeleton-associated protein 4 (602 aa).

The disordered stretch occupies residues 1-83; the sequence is MPSAKQRGSK…GGGGKSSSSS (83 aa). Residues 1-106 are Cytoplasmic-facing; sequence MPSAKQRGSK…SASCSRRLGR (106 aa). Phosphoserine occurs at positions 3, 17, and 19. At Lys21 the chain carries N6-acetyllysine. The segment covering 35 to 52 has biased composition (pro residues); the sequence is KPPPAPQQPPPPPAPHPQ. Residues 53–64 are compositionally biased toward low complexity; the sequence is QHPQQHPQNQAH. The S-palmitoyl cysteine; by ZDHHC2 moiety is linked to residue Cys100. The helical transmembrane segment at 107 to 127 threads the bilayer; the sequence is ALNFLFYLALVAAAAFSGWCV. Over 128–602 the chain is Extracellular; that stretch reads HHVLEEVQQV…VKVEKIHEKV (475 aa). Residues 130 to 214 adopt a coiled-coil conformation; that stretch reads VLEEVQQVRR…QKLQNEILKD (85 aa). At Ser232 the chain carries Phosphoserine; by FAM20C. Coiled coils occupy residues 256–460 and 533–602; these read TEVQ…GLGS and LSSL…HEKV. A Phosphoserine modification is found at Ser312.

Interacts with REEP5. Reversibly palmitoylated. Palmitoylation at Cys-100 by ZDHHC2 is required for its trafficking from the ER to the plasma membrane and for its perinuclear localization. Palmitoylation by ZDHHC2 is also required for its function in APF-mediated antiproliferative signaling. In terms of processing, increased phosphorylation during mitosis prevents binding to microtubules.

The protein resides in the endoplasmic reticulum membrane. Its subcellular location is the cell membrane. The protein localises to the cytoplasm. It is found in the cytoskeleton. It localises to the perinuclear region. Mediates the anchoring of the endoplasmic reticulum to microtubules. Functionally, high-affinity epithelial cell surface receptor for the FZD8-related low molecular weight sialoglycopeptide APF/antiproliferative factor. Mediates the APF antiproliferative signaling within cells. This Homo sapiens (Human) protein is Cytoskeleton-associated protein 4 (CKAP4).